We begin with the raw amino-acid sequence, 132 residues long: Interleukin-13 (132 aa).

The first 18 residues, M1–A18, serve as a signal peptide directing secretion. N38, N49, N57, and N72 each carry an N-linked (GlcNAc...) asparagine glycan. Intrachain disulfides connect C48-C76 and C64-C90.

This sequence belongs to the IL-4/IL-13 family. Interacts with IL13RA2.

The protein resides in the secreted. Cytokine that plays important roles in allergic inflammation and immune response to parasite infection. Synergizes with IL2 in regulating interferon-gamma synthesis. Stimulates B-cell proliferation, and activation of eosinophils, basophils, and mast cells. Plays an important role in controlling IL33 activity by modulating the production of transmembrane and soluble forms of interleukin-1 receptor-like 1/IL1RL1. Displays the capacity to antagonize Th1-driven proinflammatory immune response and downregulates synthesis of many proinflammatory cytokines including IL1, IL6, IL10, IL12 and TNF-alpha through a mechanism that partially involves suppression of NF-kappa-B. Also functions on nonhematopoietic cells, including endothelial cells where it induces vascular cell adhesion protein 1/VCAM1, which is important in the recruitment of eosinophils. Exerts its biological effects through its receptors which comprises the IL4R chain and the IL13RA1 chain, to activate JAK1 and TYK2, leading to the activation of STAT6. Aside from IL13RA1, another receptor IL13RA2 acts as a high affinity decoy for IL13 and mediates internalization and depletion of extracellular IL13. The chain is Interleukin-13 (IL13) from Macaca thibetana (Pere David's macaque).